Reading from the N-terminus, the 254-residue chain is Uridylate kinase (254 aa).

Residue 9–12 (KLSG) coordinates ATP. G51 contributes to the UMP binding site. 2 residues coordinate ATP: G52 and R56. Residues D72 and 133 to 140 (SGNPFFTT) contribute to the UMP site. ATP-binding residues include T160, Y166, and D169.

This sequence belongs to the UMP kinase family. As to quaternary structure, homohexamer.

The protein localises to the cytoplasm. The catalysed reaction is UMP + ATP = UDP + ADP. It functions in the pathway pyrimidine metabolism; CTP biosynthesis via de novo pathway; UDP from UMP (UMPK route): step 1/1. Its activity is regulated as follows. Inhibited by UTP. Functionally, catalyzes the reversible phosphorylation of UMP to UDP. This chain is Uridylate kinase, found in Synechococcus sp. (strain JA-3-3Ab) (Cyanobacteria bacterium Yellowstone A-Prime).